The chain runs to 602 residues: Type 2 DNA topoisomerase 6 subunit B (602 aa).

Residues Asn-40, Asp-71, 92-93 (SR), 102-109 (GQQGIGIS), and Lys-425 contribute to the ATP site.

This sequence belongs to the TOP6B family. As to quaternary structure, homodimer. Heterotetramer of two Top6A and two Top6B chains.

The enzyme catalyses ATP-dependent breakage, passage and rejoining of double-stranded DNA.. Functionally, relaxes both positive and negative superturns and exhibits a strong decatenase activity. This chain is Type 2 DNA topoisomerase 6 subunit B, found in Archaeoglobus fulgidus (strain ATCC 49558 / DSM 4304 / JCM 9628 / NBRC 100126 / VC-16).